The chain runs to 347 residues: Lipopolysaccharide core heptosyltransferase OpsX (347 aa).

It belongs to the glycosyltransferase 9 family.

It participates in bacterial outer membrane biogenesis; LPS core biosynthesis. Its function is as follows. Catalyzes heptose transfer to the lipopolysaccharide core. It transfers the first L-glycero-D-manno-heptose to the phosphorylated 3-deoxy-alpha-D-manno-octulosonic acid (Kdo-P) of the inner core. This chain is Lipopolysaccharide core heptosyltransferase OpsX, found in Haemophilus influenzae (strain ATCC 51907 / DSM 11121 / KW20 / Rd).